The primary structure comprises 524 residues: Hydroxysteroid dehydrogenase-like protein 2 (524 aa).

Residues 17-23 (GASRGIG), Lys42, and Asp74 contribute to the NADP(+) site. At Lys42 the chain carries N6-(2-hydroxyisobutyryl)lysine. Lys116 carries the N6-acetyllysine modification. Tyr168 acts as the Proton acceptor in catalysis. Residue Lys172 participates in NADP(+) binding. Basic and acidic residues predominate over residues 283 to 300 (EEKESYDPVPEVKEEKLQ). Residues 283–410 (EEKESYDPVP…PLLQSVLPPK (128 aa)) form a disordered region. Residues 301-391 (LQEQPQLQEQ…QQQPQQRPQQ (91 aa)) show a composition bias toward low complexity. Positions 414 to 521 (GAVEETFRIV…KLEKLMTHMN (108 aa)) constitute an SCP2 domain. Lys424 carries the N6-succinyllysine modification.

The protein belongs to the short-chain dehydrogenases/reductases (SDR) family.

It is found in the peroxisome. The protein localises to the mitochondrion. Its function is as follows. Has apparently no steroid dehydrogenase activity. Controls bile acid (BA) and lipid metabolism in response to nutritional cues. The protein is Hydroxysteroid dehydrogenase-like protein 2 (Hsdl2) of Rattus norvegicus (Rat).